The sequence spans 338 residues: MKRLFSNVINLTLVLIVGVALSGCTVSNASIGSSSPWSLVDLDTEANPLDVDFVDDKNGFLVGTNRLILETNDGGITWKERNLDIPSEGNFRLISVDFKGQEGWIAGQPGLILHTTDGGKNWTRLDLGNKLPGDPYLITTIDTDIAELATTAGAIYKTTDAGTNWEAIVVDTSGSGGIRELRRTNNGGYISVSSLGNFFSVLRPGEEIWSPHQRASSKRVQSVGEQPNGDLWMLSRGAEIRFNADPDDIDSWSKPIIPIVNGYNYQDLVWDPSKSIWAAGGNGTLLVSNDEGKTWEKDPVGESVPTNFIRILFLDDLNSESPKGFVFGERGNLLRWQG.

A signal peptide spans 1-23 (MKRLFSNVINLTLVLIVGVALSG). Residue Cys24 is the site of N-palmitoyl cysteine attachment. The S-diacylglycerol cysteine moiety is linked to residue Cys24.

It belongs to the Ycf48 family. In terms of assembly, part of early PSII assembly complexes which includes D1 (psbA) and PsbI; not found in mature PSII. Binds to the lumenal side of PSII complexes. Interacts with YidC.

The protein resides in the cellular thylakoid membrane. Its function is as follows. A factor required for optimal assembly of photosystem II (PSII), acting in the early stages of PSII assembly. Also plays a role in replacement of photodamaged D1 (psbA). Assists YidC in synthesis of chlorophyll-binding proteins. This Prochlorococcus marinus (strain NATL2A) protein is Photosystem II assembly lipoprotein Ycf48.